The following is a 361-amino-acid chain: Protein Wnt-2 (361 aa).

Positions 1-27 (MNASVLGLCLSGPLVLLLAWLAPPVTS) are cleaved as a signal peptide. Cystine bridges form between cysteine 77–cysteine 88, cysteine 128–cysteine 136, cysteine 138–cysteine 158, cysteine 207–cysteine 221, cysteine 209–cysteine 216, cysteine 279–cysteine 310, cysteine 295–cysteine 305, cysteine 309–cysteine 349, cysteine 325–cysteine 340, cysteine 327–cysteine 337, and cysteine 332–cysteine 333. A lipid anchor (O-palmitoleoyl serine; by PORCN) is attached at serine 213. The N-linked (GlcNAc...) asparagine glycan is linked to asparagine 296.

Belongs to the Wnt family. Post-translationally, palmitoleoylation is required for efficient binding to frizzled receptors. Depalmitoleoylation leads to Wnt signaling pathway inhibition.

The protein localises to the secreted. It is found in the extracellular space. The protein resides in the extracellular matrix. Functionally, ligand for members of the frizzled family of seven transmembrane receptors. Probable developmental protein. May be a signaling molecule which affects the development of discrete regions of tissues. Is likely to signal over only few cell diameters. The chain is Protein Wnt-2 (WNT2) from Ornithorhynchus anatinus (Duckbill platypus).